The primary structure comprises 226 residues: Deoxyribose-phosphate aldolase (226 aa).

Glutamate 96 acts as the Proton donor/acceptor in catalysis. Catalysis depends on lysine 157, which acts as the Schiff-base intermediate with acetaldehyde. Residue lysine 185 is the Proton donor/acceptor of the active site.

The protein belongs to the DeoC/FbaB aldolase family. DeoC type 1 subfamily.

Its subcellular location is the cytoplasm. It carries out the reaction 2-deoxy-D-ribose 5-phosphate = D-glyceraldehyde 3-phosphate + acetaldehyde. It participates in carbohydrate degradation; 2-deoxy-D-ribose 1-phosphate degradation; D-glyceraldehyde 3-phosphate and acetaldehyde from 2-deoxy-alpha-D-ribose 1-phosphate: step 2/2. Catalyzes a reversible aldol reaction between acetaldehyde and D-glyceraldehyde 3-phosphate to generate 2-deoxy-D-ribose 5-phosphate. The polypeptide is Deoxyribose-phosphate aldolase (Gloeobacter violaceus (strain ATCC 29082 / PCC 7421)).